The sequence spans 325 residues: GTP 3',8-cyclase (325 aa).

A Radical SAM core domain is found at 1–226 (MNTVNYLRIS…EGACYGNGPA (226 aa)). Residue Arg8 coordinates GTP. The [4Fe-4S] cluster site is built by Cys15 and Cys19. Residue Tyr21 coordinates S-adenosyl-L-methionine. Cys22 serves as a coordination point for [4Fe-4S] cluster. Residue Arg60 participates in GTP binding. Gly64 provides a ligand contact to S-adenosyl-L-methionine. Ser91 contributes to the GTP binding site. Residue Ser115 coordinates S-adenosyl-L-methionine. Residue Lys152 coordinates GTP. S-adenosyl-L-methionine is bound at residue Met186. Residues Cys249 and Cys252 each coordinate [4Fe-4S] cluster. 254 to 256 (RVR) is a binding site for GTP. Cys266 serves as a coordination point for [4Fe-4S] cluster.

This sequence belongs to the radical SAM superfamily. MoaA family. Monomer and homodimer. [4Fe-4S] cluster is required as a cofactor.

It carries out the reaction GTP + AH2 + S-adenosyl-L-methionine = (8S)-3',8-cyclo-7,8-dihydroguanosine 5'-triphosphate + 5'-deoxyadenosine + L-methionine + A + H(+). It functions in the pathway cofactor biosynthesis; molybdopterin biosynthesis. Its function is as follows. Catalyzes the cyclization of GTP to (8S)-3',8-cyclo-7,8-dihydroguanosine 5'-triphosphate. The chain is GTP 3',8-cyclase from Gloeobacter violaceus (strain ATCC 29082 / PCC 7421).